Reading from the N-terminus, the 68-residue chain is Large ribosomal subunit protein bL33c (68 aa).

The protein belongs to the bacterial ribosomal protein bL33 family.

It localises to the plastid. Its subcellular location is the chloroplast. In Nymphaea alba (White water-lily), this protein is Large ribosomal subunit protein bL33c.